The chain runs to 193 residues: Holliday junction branch migration complex subunit RuvA (193 aa).

Residues 1-64 (MIGRIAGTLL…EDAHLLYGFL (64 aa)) are domain I. A domain II region spans residues 65–139 (TPPERSTFRE…GKLGADLGPL (75 aa)). The tract at residues 139–143 (LAGAA) is flexible linker. The segment at 144–193 (SPSDHATDILNALVALGYSEKEALAAIKNVPAGTGVSEGIKLSLKALSKA) is domain III.

Belongs to the RuvA family. In terms of assembly, homotetramer. Forms an RuvA(8)-RuvB(12)-Holliday junction (HJ) complex. HJ DNA is sandwiched between 2 RuvA tetramers; dsDNA enters through RuvA and exits via RuvB. An RuvB hexamer assembles on each DNA strand where it exits the tetramer. Each RuvB hexamer is contacted by two RuvA subunits (via domain III) on 2 adjacent RuvB subunits; this complex drives branch migration. In the full resolvosome a probable DNA-RuvA(4)-RuvB(12)-RuvC(2) complex forms which resolves the HJ.

It localises to the cytoplasm. In terms of biological role, the RuvA-RuvB-RuvC complex processes Holliday junction (HJ) DNA during genetic recombination and DNA repair, while the RuvA-RuvB complex plays an important role in the rescue of blocked DNA replication forks via replication fork reversal (RFR). RuvA specifically binds to HJ cruciform DNA, conferring on it an open structure. The RuvB hexamer acts as an ATP-dependent pump, pulling dsDNA into and through the RuvAB complex. HJ branch migration allows RuvC to scan DNA until it finds its consensus sequence, where it cleaves and resolves the cruciform DNA. In Burkholderia mallei (strain NCTC 10229), this protein is Holliday junction branch migration complex subunit RuvA.